The following is a 436-amino-acid chain: ATP-dependent protease ATPase subunit HslU (436 aa).

Residues I19, 61-65, D249, E314, and R386 contribute to the ATP site; that span reads GVGKT.

The protein belongs to the ClpX chaperone family. HslU subfamily. In terms of assembly, a double ring-shaped homohexamer of HslV is capped on each side by a ring-shaped HslU homohexamer. The assembly of the HslU/HslV complex is dependent on binding of ATP.

Its subcellular location is the cytoplasm. ATPase subunit of a proteasome-like degradation complex; this subunit has chaperone activity. The binding of ATP and its subsequent hydrolysis by HslU are essential for unfolding of protein substrates subsequently hydrolyzed by HslV. HslU recognizes the N-terminal part of its protein substrates and unfolds these before they are guided to HslV for hydrolysis. This chain is ATP-dependent protease ATPase subunit HslU, found in Bartonella henselae (strain ATCC 49882 / DSM 28221 / CCUG 30454 / Houston 1) (Rochalimaea henselae).